Consider the following 259-residue polypeptide: MQTVCASLCGYARIPTEEPSYEEVRVNTHPQGAALLRLQEALTAVNGLLPAPLTLEDVVASADNTRRLVRAQALARTYAACSRNIECLKQHHFTEDNPGLNAVVRSHMENSKRLADMCLAAITHLYLSVGAVDVTTDDIVDQTLRMTAESEVVMSDVVLLEKTLGVVAKPQASFDVSHNHELSIAKGENVGLKTSPIKSEATQLSEIKPPLIEVSDNNTSNLTKKTYPTETLQPVLTPKQTQDVQRTTPAIKKSHVMLV.

A lipid anchor (S-palmitoyl cysteine; by host) is attached at cysteine 9.

Belongs to the herpesviridae UL51 family. Oligomerizes. Interacts with ORF53; this interaction mediates ORF53 incorporation to virions. In terms of processing, phosphorylated. Post-translationally, palmitoylation is necessary for Golgi localization.

It is found in the virion tegument. Its subcellular location is the host cytoplasm. The protein resides in the host Golgi apparatus. Functionally, plays several roles during the time course of infection, including egress of virus particles from the perinuclear space and secondary envelopment of cytoplasmic capsids that bud into specific trans-Golgi network (TGN)-derived membranes. This Varicella-zoster virus (strain Dumas) (HHV-3) protein is Tegument protein UL51 homolog.